A 157-amino-acid polypeptide reads, in one-letter code: Crossover junction endodeoxyribonuclease RuvC (157 aa).

Residues aspartate 7, glutamate 67, and aspartate 140 contribute to the active site. Residues aspartate 7, glutamate 67, and aspartate 140 each coordinate Mg(2+).

The protein belongs to the RuvC family. Homodimer which binds Holliday junction (HJ) DNA. The HJ becomes 2-fold symmetrical on binding to RuvC with unstacked arms; it has a different conformation from HJ DNA in complex with RuvA. In the full resolvosome a probable DNA-RuvA(4)-RuvB(12)-RuvC(2) complex forms which resolves the HJ. The cofactor is Mg(2+).

The protein resides in the cytoplasm. The catalysed reaction is Endonucleolytic cleavage at a junction such as a reciprocal single-stranded crossover between two homologous DNA duplexes (Holliday junction).. The RuvA-RuvB-RuvC complex processes Holliday junction (HJ) DNA during genetic recombination and DNA repair. Endonuclease that resolves HJ intermediates. Cleaves cruciform DNA by making single-stranded nicks across the HJ at symmetrical positions within the homologous arms, yielding a 5'-phosphate and a 3'-hydroxyl group; requires a central core of homology in the junction. The consensus cleavage sequence is 5'-(A/T)TT(C/G)-3'. Cleavage occurs on the 3'-side of the TT dinucleotide at the point of strand exchange. HJ branch migration catalyzed by RuvA-RuvB allows RuvC to scan DNA until it finds its consensus sequence, where it cleaves and resolves the cruciform DNA. The sequence is that of Crossover junction endodeoxyribonuclease RuvC from Thermosipho melanesiensis (strain DSM 12029 / CIP 104789 / BI429).